The sequence spans 86 residues: Small ribosomal subunit protein uS15 (86 aa).

It belongs to the universal ribosomal protein uS15 family. Part of the 30S ribosomal subunit. Forms a bridge to the 50S subunit in the 70S ribosome, contacting the 23S rRNA.

Its function is as follows. One of the primary rRNA binding proteins, it binds directly to 16S rRNA where it helps nucleate assembly of the platform of the 30S subunit by binding and bridging several RNA helices of the 16S rRNA. Functionally, forms an intersubunit bridge (bridge B4) with the 23S rRNA of the 50S subunit in the ribosome. The protein is Small ribosomal subunit protein uS15 of Neorickettsia sennetsu (strain ATCC VR-367 / Miyayama) (Ehrlichia sennetsu).